We begin with the raw amino-acid sequence, 292 residues long: NAD kinase (292 aa).

Asp-73 serves as the catalytic Proton acceptor. NAD(+) contacts are provided by residues 73–74, 147–148, His-158, Arg-175, Asp-177, 188–193, and Gln-247; these read DG, NE, and TAYSLS.

The protein belongs to the NAD kinase family. The cofactor is a divalent metal cation.

It is found in the cytoplasm. The catalysed reaction is NAD(+) + ATP = ADP + NADP(+) + H(+). Involved in the regulation of the intracellular balance of NAD and NADP, and is a key enzyme in the biosynthesis of NADP. Catalyzes specifically the phosphorylation on 2'-hydroxyl of the adenosine moiety of NAD to yield NADP. This Escherichia coli O157:H7 protein is NAD kinase.